The sequence spans 245 residues: 5-oxoprolinase subunit A (245 aa).

This sequence belongs to the LamB/PxpA family. Forms a complex composed of PxpA, PxpB and PxpC.

It carries out the reaction 5-oxo-L-proline + ATP + 2 H2O = L-glutamate + ADP + phosphate + H(+). Its function is as follows. Catalyzes the cleavage of 5-oxoproline to form L-glutamate coupled to the hydrolysis of ATP to ADP and inorganic phosphate. The polypeptide is 5-oxoprolinase subunit A (Haemophilus influenzae (strain 86-028NP)).